The primary structure comprises 479 residues: Cardiolipin synthase (479 aa).

2 helical membrane-spanning segments follow: residues serine 5–leucine 25 and tryptophan 34–phenylalanine 54. 2 PLD phosphodiesterase domains span residues isoleucine 216–tyrosine 243 and glutamine 392–serine 419. Active-site residues include histidine 221, lysine 223, aspartate 228, histidine 397, lysine 399, and aspartate 404.

The protein belongs to the phospholipase D family. Cardiolipin synthase subfamily.

Its subcellular location is the cell membrane. The catalysed reaction is 2 a 1,2-diacyl-sn-glycero-3-phospho-(1'-sn-glycerol) = a cardiolipin + glycerol. Functionally, catalyzes the reversible phosphatidyl group transfer from one phosphatidylglycerol molecule to another to form cardiolipin (CL) (diphosphatidylglycerol) and glycerol. This chain is Cardiolipin synthase (cls), found in Oceanobacillus iheyensis (strain DSM 14371 / CIP 107618 / JCM 11309 / KCTC 3954 / HTE831).